We begin with the raw amino-acid sequence, 383 residues long: Cytochrome b (383 aa).

4 consecutive transmembrane segments (helical) span residues F34 to M54, W78 to I99, W114 to L134, and F179 to I199. Positions 84 and 98 each coordinate heme b. Heme b is bound by residues H183 and H197. H202 serves as a coordination point for a ubiquinone. Helical transmembrane passes span M227–L247, L289–H309, L321–G341, and Y348–P368.

This sequence belongs to the cytochrome b family. As to quaternary structure, the cytochrome bc1 complex contains 3 respiratory subunits (MT-CYB, CYC1 and UQCRFS1), 2 core proteins (UQCRC1 and UQCRC2) and probably 6 low-molecular weight proteins. The cofactor is heme b.

The protein localises to the mitochondrion inner membrane. In terms of biological role, component of the ubiquinol-cytochrome c reductase complex (complex III or cytochrome b-c1 complex) that is part of the mitochondrial respiratory chain. The b-c1 complex mediates electron transfer from ubiquinol to cytochrome c. Contributes to the generation of a proton gradient across the mitochondrial membrane that is then used for ATP synthesis. This is Cytochrome b (MT-CYB) from Caiman crocodilus (Spectacled caiman).